A 974-amino-acid chain; its full sequence is Exocyst complex component 4 (974 aa).

Position 2 is an N-acetylalanine (alanine 2). An N6-acetyllysine modification is found at lysine 9. Phosphoserine is present on residues serine 32 and serine 226. Residues 32–114 (STSDDVEDRE…HCKRDELRKL (83 aa)) adopt a coiled-coil conformation. Phosphothreonine is present on residues threonine 233 and threonine 237. Serine 468 is modified (phosphoserine).

The protein belongs to the SEC8 family. The exocyst complex is composed of EXOC1, EXOC2, EXOC3, EXOC4, EXOC5, EXOC6, EXOC7 and EXOC8. Interacts with BIRC6/bruce. Interacts with MYRIP. Interacts with SH3BP1; required for the localization of both SH3BP1 and the exocyst to the leading edge of migrating cells. Interacts with SLC6A9.

The protein resides in the midbody. The protein localises to the midbody ring. It localises to the cell projection. It is found in the cytoplasm. Its subcellular location is the cytoskeleton. The protein resides in the microtubule organizing center. The protein localises to the centrosome. In terms of biological role, component of the exocyst complex involved in the docking of exocytic vesicles with fusion sites on the plasma membrane. The polypeptide is Exocyst complex component 4 (EXOC4) (Homo sapiens (Human)).